Here is an 861-residue protein sequence, read N- to C-terminus: Translation initiation factor IF-2 (861 aa).

The segment at 107-272 is disordered; that stretch reads AQKQQDIQRA…QRKKKSKVVQ (166 aa). The span at 115 to 128 shows a compositional bias: basic and acidic residues; the sequence is RAAEEAAAKERETE. Composition is skewed to polar residues over residues 148-158 and 169-180; these read SVQQEAANMDT and VDESVSATTAGG. Over residues 210–228 the composition is skewed to basic and acidic residues; it reads NKEDSEVRREPADAEDLKR. The span at 260–269 shows a compositional bias: basic residues; it reads RARQRKKKSK. The 170-residue stretch at 362-531 folds into the tr-type G domain; it reads SRAPVVSVMG…LLQSEMLELT (170 aa). Positions 371-378 are G1; the sequence is GHVDHGKT. 371–378 is a GTP binding site; sequence GHVDHGKT. Residues 396 to 400 are G2; it reads GITQH. A G3 region spans residues 417–420; sequence DTPG. GTP-binding positions include 417-421 and 471-474; these read DTPGH and NKMD. The segment at 471–474 is G4; it reads NKMD. Residues 507 to 509 are G5; it reads SAH.

This sequence belongs to the TRAFAC class translation factor GTPase superfamily. Classic translation factor GTPase family. IF-2 subfamily.

It is found in the cytoplasm. In terms of biological role, one of the essential components for the initiation of protein synthesis. Protects formylmethionyl-tRNA from spontaneous hydrolysis and promotes its binding to the 30S ribosomal subunits. Also involved in the hydrolysis of GTP during the formation of the 70S ribosomal complex. The polypeptide is Translation initiation factor IF-2 (Hahella chejuensis (strain KCTC 2396)).